The sequence spans 105 residues: Large ribosomal subunit protein uL24 (105 aa).

The segment at 40–61 (RIKKHTPQSANERGASSGGIVT) is disordered.

The protein belongs to the universal ribosomal protein uL24 family. In terms of assembly, part of the 50S ribosomal subunit.

In terms of biological role, one of two assembly initiator proteins, it binds directly to the 5'-end of the 23S rRNA, where it nucleates assembly of the 50S subunit. One of the proteins that surrounds the polypeptide exit tunnel on the outside of the subunit. This Mycobacteroides abscessus (strain ATCC 19977 / DSM 44196 / CCUG 20993 / CIP 104536 / JCM 13569 / NCTC 13031 / TMC 1543 / L948) (Mycobacterium abscessus) protein is Large ribosomal subunit protein uL24.